The primary structure comprises 655 residues: Hepatocyte growth factor activator serine protease (655 aa).

Residues 1 to 35 (MGRWAWVPSPWPPPGLGPFLLLLLLLLLLPRGFQP) form the signal peptide. Positions 36 to 372 (QPGGNRTESP…RLEACESLTR (337 aa)) are cleaved as a propeptide — removed in mature form. 2 N-linked (GlcNAc...) asparagine glycosylation sites follow: N40 and N48. The tract at residues 64–102 (TSETPATSAPEAEGPQSGGLPPPPRAVPSSSSPQAQALT) is disordered. Positions 103-150 (EDGRPCRFPFRYGGRMLHACTSEGSAHRKWCATTHNYDRDRAWGYCVE) constitute a Fibronectin type-II domain. Cystine bridges form between C108–C133, C122–C148, C164–C175, C169–C186, C188–C197, C202–C230, C228–C237, C245–C256, C250–C267, C269–C278, C286–C367, C307–C349, C338–C362, C394–C521, C432–C448, C440–C510, C535–C604, C567–C583, and C594–C622. The EGF-like 1 domain occupies 160-198 (ALDPCASGPCLNGGSCSNTQDPQSYHCSCPRAFTGKDCG). Residues 200 to 240 (EKCFDETRYEYLEGGDRWARVRQGHVEQCECFGGRTWCEGT) enclose the Fibronectin type-I domain. In terms of domain architecture, EGF-like 2 spans 241–279 (RHTACLSSPCLNGGTCHLIVATGTTVCACPPGFAGRLCN). The 82-residue stretch at 286–367 (CFLGNGTGYR…SWEYCRLEAC (82 aa)) folds into the Kringle domain. The N-linked (GlcNAc...) asparagine glycan is linked to N290. The Peptidase S1 domain occupies 408 to 646 (IIGGSSSLPG…YVDWINDRIR (239 aa)). H447 serves as the catalytic Charge relay system. Residues N468 and N492 are each glycosylated (N-linked (GlcNAc...) asparagine). The active-site Charge relay system is D497. N-linked (GlcNAc...) asparagine glycosylation occurs at N546. Catalysis depends on S598, which acts as the Charge relay system.

The protein belongs to the peptidase S1 family. In terms of assembly, heterodimer of a short chain and a long chain linked by a disulfide bond. The active form of HGFAC presents in the serum is derived from the COOH-terminal region of the precursor by the cleavage of bonds between Arg-372 and Val-373 and Arg-407 and Ile-408. In terms of tissue distribution, liver.

The protein localises to the secreted. Its function is as follows. Serine protease that hydrolyzes the inactive zymogen hepatocyte growth factor (HGFsc) to an activated disulfide-linked heterodimer, then initiating hepatocyte growth factor receptor signaling pathway. The polypeptide is Hepatocyte growth factor activator serine protease (Homo sapiens (Human)).